Reading from the N-terminus, the 157-residue chain is Protein Smg homolog (157 aa).

Belongs to the Smg family.

This chain is Protein Smg homolog, found in Tolumonas auensis (strain DSM 9187 / NBRC 110442 / TA 4).